The following is a 341-amino-acid chain: B3 domain-containing transcription factor VRN1 (341 aa).

The segment at residues 5–98 (FFHKLIFSST…AFSVYIFNLS (94 aa)) is a DNA-binding region (TF-B3 1). The interval 166 to 223 (GPVKAEEPTPTPKIPKKRGRKKKNADPEEINSSAPRDDDPENRSKFYESASARKRTVT) is disordered. Basic residues predominate over residues 179–188 (IPKKRGRKKK). Residues 200–211 (PRDDDPENRSKF) show a composition bias toward basic and acidic residues. Positions 244-338 (FRVVLRPSYL…VLKVTAFRVN (95 aa)) form a DNA-binding region, TF-B3 2.

As to expression, expressed in roots and at lower levels in aerial parts.

It localises to the nucleus. Its function is as follows. Essential protein. Involved in the regulation of vernalization. Acts as a transcriptional repressor of FLC, a major target of the vernalization pathway. Binds DNA in vitro in a non-sequence-specific manner. In Arabidopsis thaliana (Mouse-ear cress), this protein is B3 domain-containing transcription factor VRN1.